We begin with the raw amino-acid sequence, 244 residues long: ATP-dependent Clp protease ATP-binding subunit CLPT4, chloroplastic (244 aa).

The transit peptide at 1-64 (MQALQASRLT…WRSSGRVITR (64 aa)) directs the protein to the chloroplast. Low complexity predominate over residues 30-48 (SRPISSGVSSSQELSSRSS). 2 disordered regions span residues 30–55 (SRPI…TKSW) and 220–244 (GRRY…VSFL).

It belongs to the ClpA/ClpB family.

The protein localises to the plastid. The protein resides in the chloroplast. In terms of biological role, accessory protein regulating the assembly of the plastid Clp protease system. The polypeptide is ATP-dependent Clp protease ATP-binding subunit CLPT4, chloroplastic (Chlamydomonas reinhardtii (Chlamydomonas smithii)).